We begin with the raw amino-acid sequence, 536 residues long: CTP synthase (536 aa).

The interval 1-267 (MTKYIFVTGG…DQIVCDHLKL (267 aa)) is amidoligase domain. CTP is bound at residue S13. Position 13 (S13) interacts with UTP. Residue 14–19 (SIGKGI) participates in ATP binding. Y54 is a binding site for L-glutamine. ATP is bound at residue D71. Residues D71 and E141 each coordinate Mg(2+). Residues 148–150 (DIE), 188–193 (KTKPTQ), and K224 contribute to the CTP site. Residues 188–193 (KTKPTQ) and K224 contribute to the UTP site. A Glutamine amidotransferase type-1 domain is found at 292–535 (KIALVGKYVE…ITAAVENSQA (244 aa)). L-glutamine is bound at residue G354. Residue C381 is the Nucleophile; for glutamine hydrolysis of the active site. L-glutamine is bound by residues 382 to 385 (LGMQ), E405, and R463. Residues H508 and E510 contribute to the active site.

The protein belongs to the CTP synthase family. As to quaternary structure, homotetramer.

It catalyses the reaction UTP + L-glutamine + ATP + H2O = CTP + L-glutamate + ADP + phosphate + 2 H(+). It carries out the reaction L-glutamine + H2O = L-glutamate + NH4(+). The catalysed reaction is UTP + NH4(+) + ATP = CTP + ADP + phosphate + 2 H(+). It participates in pyrimidine metabolism; CTP biosynthesis via de novo pathway; CTP from UDP: step 2/2. With respect to regulation, allosterically activated by GTP, when glutamine is the substrate; GTP has no effect on the reaction when ammonia is the substrate. The allosteric effector GTP functions by stabilizing the protein conformation that binds the tetrahedral intermediate(s) formed during glutamine hydrolysis. Inhibited by the product CTP, via allosteric rather than competitive inhibition. Catalyzes the ATP-dependent amination of UTP to CTP with either L-glutamine or ammonia as the source of nitrogen. Regulates intracellular CTP levels through interactions with the four ribonucleotide triphosphates. This chain is CTP synthase, found in Streptococcus mutans serotype c (strain ATCC 700610 / UA159).